The following is a 1561-amino-acid chain: Adhesion G protein-coupled receptor B2 (1561 aa).

Residues 1–20 form the signal peptide; it reads MTPACPLLLSVILSLRLATA. Over 21–930 the chain is Extracellular; sequence FDPAPSACSA…ELAGAPSVPL (910 aa). Residues N94, N182, and N183 are each glycosylated (N-linked (GlcNAc...) asparagine). S257 is a glycosylation site (O-linked (Xyl...) (chondroitin sulfate) serine). TSP type-1 domains follow at residues 300-353, 355-408, 410-463, and 466-519; these read DPAA…ATCP, HGVW…AACP, EGQW…LDCP, and DGKW…KRCP. Disulfide bonds link C312/C346, C316/C352, C327/C336, C367/C402, C371/C407, C382/C392, C422/C457, C426/C462, C437/C447, C478/C513, C482/C518, C493/C503, C525/C560, and C548/C578. N-linked (GlcNAc...) asparagine glycosylation occurs at N347. The N-linked (GlcNAc...) asparagine glycan is linked to N428. N551 and N636 each carry an N-linked (GlcNAc...) asparagine glycan. The region spanning 748–918 is the GAIN-B domain; the sequence is DRLFLPKEVL…AVLAQPPKDL (171 aa). Residues 757 to 797 form a disordered region; the sequence is LSLSSPGKPATPGAATAGSPGRGRGPGTVPPGPGHAHQRLL. Positions 760-775 are enriched in low complexity; it reads SSPGKPATPGAATAGS. Residue N861 is glycosylated (N-linked (GlcNAc...) asparagine). Disulfide bonds link C868–C900 and C888–C902. A GPS region spans residues 868 to 918; it reads CASWDYSRADTNSGDWNTESCQTLETQAAHTRCQCQHLSTFAVLAQPPKDL. The helical transmembrane segment at 931 to 951 threads the bilayer; sequence VIGCAVSCMALLTLLAIYAAF. Residues 952–959 are Cytoplasmic-facing; sequence WRFIKSER. A helical transmembrane segment spans residues 960-980; that stretch reads SIILLNFCLSILASNILILVG. The Extracellular portion of the chain corresponds to 981 to 988; that stretch reads QSRVLSKG. A helical membrane pass occupies residues 989-1009; that stretch reads VCTMTAAFLHFFFLSSFCWVL. Residues 1010–1030 are Cytoplasmic-facing; sequence TEAWQSYLAVIGRMRTRLVRK. A helical membrane pass occupies residues 1031 to 1051; sequence RFLCLGWGLPALVVAVSVGFT. Over 1052–1072 the chain is Extracellular; sequence RTKGYGTSSYCWLSLEGGLLY. Residues 1073-1093 form a helical membrane-spanning segment; that stretch reads AFVGPAAVIVLVNMLIGIIVF. Over 1094 to 1115 the chain is Cytoplasmic; sequence NKLMARDGVSDKSKKQRAGSER. The helical transmembrane segment at 1116–1136 threads the bilayer; that stretch reads CPWASLLLPCSACGAVPSPLL. Residues 1137–1147 are Extracellular-facing; it reads SSASARNAMAS. A helical membrane pass occupies residues 1148–1168; sequence LWSSCVVLPLLALTWMSAVLA. The Cytoplasmic portion of the chain corresponds to 1169-1561; the sequence is MTDRRSVLFQ…PPDGDFQTEV (393 aa). Y1345 is modified (phosphotyrosine). Disordered stretches follow at residues 1355–1377, 1417–1447, and 1491–1561; these read LQPG…GTPR, FQPP…PGST, and RYRS…QTEV. A compositionally biased stretch (basic and acidic residues) spans 1366–1376; it reads EAPRARPEGTP. The span at 1491–1502 shows a compositional bias: basic and acidic residues; the sequence is RYRSQSSAKEKP. The span at 1519–1528 shows a compositional bias: polar residues; the sequence is SWSTFKSMTL. Residues 1551-1561 show a composition bias toward acidic residues; it reads EPPDGDFQTEV.

The protein belongs to the G-protein coupled receptor 2 family. Adhesion G-protein coupled receptor (ADGR) subfamily. In terms of assembly, heterodimer of 2 chains generated by proteolytic processing; the large extracellular N-terminal fragment and the membrane-bound C-terminal fragment predominantly remain associated and non-covalently linked. Interacts with GABPB2. Interacts (via carboxy-terminus) with TAX1BP3. Interacts with GNAZ. Interacts with SH3GL2. Post-translationally, glycosylated. Autoproteolytically processed at the GPS region of the GAIN-B domain; this cleavage modulates receptor activity. Additionally, furin is involved in the cleavage at another site, in the middle of the extracellular domain, generating a soluble fragment. As to expression, specifically expressed in the brain. The peak level in the brain is observed 10 days after birth.

It is found in the cell membrane. The protein resides in the secreted. Its activity is regulated as follows. Receptor activity is regulated by proteolytic processing. The long N-terminal has a an inhibitory effect on the constitutive signaling activity. Removal of the N-terminal region induces an increase of the receptor activity. Functionally, orphan G-protein coupled receptor involved in cell adhesion and probably in cell-cell interactions. Activates NFAT-signaling pathway, a transcription factor, via the G-protein GNAZ. Involved in angiogenesis inhibition. The chain is Adhesion G protein-coupled receptor B2 (Adgrb2) from Mus musculus (Mouse).